We begin with the raw amino-acid sequence, 139 residues long: Nuclear transcription factor Y subunit B-4 (139 aa).

A DNA-binding region spans residues 8-14 (LPIANVG). The segment at 35-46 (VQECATEFISFV) is subunit association domain (SAD). The segment covering 90 to 115 (YREAERERTEHNKGSNDSGNEKETNT) has biased composition (basic and acidic residues). A disordered region spans residues 90–139 (YREAERERTEHNKGSNDSGNEKETNTRSDVQNQSTKFIRVVEKGSSSSAR). Over residues 116–125 (RSDVQNQSTK) the composition is skewed to polar residues.

It belongs to the NFYB/HAP3 subunit family. In terms of assembly, heterotrimeric transcription factor composed of three components, NF-YA, NF-YB and NF-YC. NF-YB and NF-YC must interact and dimerize for NF-YA association and DNA binding. In terms of tissue distribution, expressed in flowers, siliques and young rosettes.

Its subcellular location is the nucleus. Functionally, component of the NF-Y/HAP transcription factor complex. The NF-Y complex stimulates the transcription of various genes by recognizing and binding to a CCAAT motif in promoters. This Arabidopsis thaliana (Mouse-ear cress) protein is Nuclear transcription factor Y subunit B-4 (NFYB4).